The sequence spans 590 residues: Membrane protein insertase YidC (590 aa).

5 consecutive transmembrane segments (helical) span residues 5 to 25 (SVIGFALIAAIMIVWLQFMKP), 368 to 388 (GLIIIIFAFLIKLVTWPLSLA), 433 to 453 (LGGCLPTVIQMPLLFAMFYVF), 483 to 503 (LPLYGDHIAIMPILMAVTVFF), and 519 to 539 (IMMWLFPAMMLFFFNNMPAGL).

The protein belongs to the OXA1/ALB3/YidC family. Type 1 subfamily. In terms of assembly, interacts with the Sec translocase complex via SecD. Specifically interacts with transmembrane segments of nascent integral membrane proteins during membrane integration.

The protein localises to the cell inner membrane. Functionally, required for the insertion and/or proper folding and/or complex formation of integral membrane proteins into the membrane. Involved in integration of membrane proteins that insert both dependently and independently of the Sec translocase complex, as well as at least some lipoproteins. Aids folding of multispanning membrane proteins. This is Membrane protein insertase YidC from Chlorobaculum tepidum (strain ATCC 49652 / DSM 12025 / NBRC 103806 / TLS) (Chlorobium tepidum).